Consider the following 224-residue polypeptide: Zinc finger C4H2 domain-containing protein (224 aa).

A coiled-coil region spans residues 12 to 97; the sequence is ENIKEIRNKT…NKLLESTRRL (86 aa). Disordered stretches follow at residues 166 to 185 and 204 to 224; these read QAAR…QPPP and PLCK…KPDE. The C4H2-type zinc finger occupies 189–206; sequence CLSCHQQIHRNAPICPLC. Residues 208–224 are compositionally biased toward basic residues; it reads AKSRSRNPKKPKRKPDE.

It localises to the nucleus. The protein resides in the cytoplasm. Its subcellular location is the postsynaptic cell membrane. Plays a role in GABAergic and V2 interneurons differentiation. Involved in motoneuron development and in neuromuscular junction formation. This chain is Zinc finger C4H2 domain-containing protein (zc4h2), found in Danio rerio (Zebrafish).